Consider the following 819-residue polypeptide: Proteome of basal body protein 15 (819 aa).

Low complexity-rich tracts occupy residues 46-59 (PASS…NPGR) and 572-581 (RQQQQQQQHT). Disordered stretches follow at residues 46–72 (PASS…LATG) and 564–590 (ERQR…GGGV). Residues 546-580 (YVVLREAVARVQARMEQQERQRRLLERQQQQQQQH) are a coiled coil.

It is found in the cytoplasm. The protein localises to the cytoskeleton. Its subcellular location is the microtubule organizing center. It localises to the centrosome. The protein resides in the centriole. In Chlamydomonas reinhardtii (Chlamydomonas smithii), this protein is Proteome of basal body protein 15.